An 843-amino-acid polypeptide reads, in one-letter code: Neuroligin-1 (843 aa).

The signal sequence occupies residues 1–45; that stretch reads MALPRCMWPNYVWRAMMACVVHRGSGAPLTLCLLGCLLQTFHVLS. Residues 46–697 lie on the Extracellular side of the membrane; that stretch reads QKLDDVDPLV…DQRDYSTELS (652 aa). An N-linked (GlcNAc...) (complex) asparagine glycan is attached at asparagine 109. A disulfide bridge links cysteine 117 with cysteine 153. The tract at residues 167–190 is disordered; the sequence is LTKKHTDDLGDNDGAEDEDIRDSG. Positions 175 to 186 are enriched in acidic residues; it reads LGDNDGAEDEDI. N-linked (GlcNAc...) (complex) asparagine glycosylation is found at asparagine 303 and asparagine 343. Cystine bridges form between cysteine 342–cysteine 353 and cysteine 512–cysteine 546. The N-linked (GlcNAc...) asparagine glycan is linked to asparagine 547. A disordered region spans residues 647-688; that stretch reads TKVPSTDITLRPTRKNSTPVTSAFPTAKQDDPKQQPSPFSVD. Over residues 661–670 the composition is skewed to polar residues; that stretch reads KNSTPVTSAF. 2 O-linked (GalNAc...) serine glycosylation sites follow: serine 683 and serine 686. Residues 698 to 718 form a helical membrane-spanning segment; sequence VTIAVGASLLFLNILAFAALY. Residues 719 to 843 lie on the Cytoplasmic side of the membrane; sequence YKKDKRRHDV…HPHSHSTTRV (125 aa). The interval 822–843 is disordered; the sequence is GGQNNTLPHPHPHPHSHSTTRV. Residues 831 to 843 are compositionally biased toward basic residues; that stretch reads PHPHPHSHSTTRV.

Belongs to the type-B carboxylesterase/lipase family. As to quaternary structure, interacts with neurexins NRXN1, NRXN2 and NRXN3. Interaction with neurexins is mediated by heparan sulfate glycan modification on neurexin. Interacts (via its C-terminus) with DLG4/PSD-95 (via PDZ domain 3). Interacts with AIP1, GOPC and PDZRN3. Interacts with NLGN3. As to expression, brain and arteries (at protein level). Expressed in olfactory bulb. Detected in brain.

The protein localises to the cell membrane. The protein resides in the postsynaptic density. Its subcellular location is the synaptic cleft. It is found in the synaptic cell membrane. Cell surface protein involved in cell-cell-interactions via its interactions with neurexin family members. Plays a role in synapse function and synaptic signal transmission, and probably mediates its effects by recruiting and clustering other synaptic proteins. May promote the initial formation of synapses, but is not essential for this. In vitro, triggers the de novo formation of presynaptic structures. May be involved in specification of excitatory synapses. Required to maintain wakefulness quality and normal synchrony of cerebral cortex activity during wakefulness and sleep. The protein is involved in nervous system development. The sequence is that of Neuroligin-1 (Nlgn1) from Mus musculus (Mouse).